Here is a 129-residue protein sequence, read N- to C-terminus: Small ribosomal subunit protein uS11 (129 aa).

This sequence belongs to the universal ribosomal protein uS11 family. As to quaternary structure, part of the 30S ribosomal subunit. Interacts with proteins S7 and S18. Binds to IF-3.

Located on the platform of the 30S subunit, it bridges several disparate RNA helices of the 16S rRNA. Forms part of the Shine-Dalgarno cleft in the 70S ribosome. This Roseobacter denitrificans (strain ATCC 33942 / OCh 114) (Erythrobacter sp. (strain OCh 114)) protein is Small ribosomal subunit protein uS11.